A 106-amino-acid chain; its full sequence is Protein Rev (106 aa).

The tract at residues 8–16 (VIKFLYQSN) is homomultimerization. A disordered region spans residues 13 to 36 (YQSNPPPRPEGTRQARRNRRRRWR). A Nuclear localization signal and RNA-binding (RRE) motif is present at residues 24 to 40 (TRQARRNRRRRWRARQR). A compositionally biased stretch (basic residues) spans 26-36 (QARRNRRRRWR). The Nuclear export signal and binding to XPO1 motif lies at 63–74 (LQLPPLERLTLD). 2 positions are modified to phosphoserine; by host: S82 and S89.

The protein belongs to the HIV-1 REV protein family. In terms of assembly, homomultimer; when bound to the RRE. Multimeric assembly is essential for activity and may involve XPO1. Binds to human KPNB1, XPO1, TNPO1, RANBP5 and IPO7. Interacts with the viral Integrase. Interacts with human KHDRBS1. Interacts with human NAP1; this interaction decreases Rev multimerization and stimulates its activity. Interacts with human DEAD-box helicases DDX3 and DDX24; these interactions may serve for viral RNA export to the cytoplasm and packaging, respectively. Interacts with human PSIP1; this interaction may inhibit HIV-1 DNA integration by promoting dissociation of the Integrase-LEDGF/p75 complex. Asymmetrically arginine dimethylated at one site by host PRMT6. Methylation impairs the RNA-binding activity and export of viral RNA from the nucleus to the cytoplasm. In terms of processing, phosphorylated by protein kinase CK2. Presence of, and maybe binding to the N-terminus of the regulatory beta subunit of CK2 is necessary for CK2-mediated Rev's phosphorylation.

The protein localises to the host nucleus. Its subcellular location is the host nucleolus. It localises to the host cytoplasm. Escorts unspliced or incompletely spliced viral pre-mRNAs (late transcripts) out of the nucleus of infected cells. These pre-mRNAs carry a recognition sequence called Rev responsive element (RRE) located in the env gene, that is not present in fully spliced viral mRNAs (early transcripts). This function is essential since most viral proteins are translated from unspliced or partially spliced pre-mRNAs which cannot exit the nucleus by the pathway used by fully processed cellular mRNAs. Rev itself is translated from a fully spliced mRNA that readily exits the nucleus. Rev's nuclear localization signal (NLS) binds directly to KPNB1/Importin beta-1 without previous binding to KPNA1/Importin alpha-1. KPNB1 binds to the GDP bound form of RAN (Ran-GDP) and targets Rev to the nucleus. In the nucleus, the conversion from Ran-GDP to Ran-GTP dissociates Rev from KPNB1 and allows Rev's binding to the RRE in viral pre-mRNAs. Rev multimerization on the RRE via cooperative assembly exposes its nuclear export signal (NES) to the surface. Rev can then form a complex with XPO1/CRM1 and Ran-GTP, leading to nuclear export of the complex. Conversion from Ran-GTP to Ran-GDP mediates dissociation of the Rev/RRE/XPO1/RAN complex, so that Rev can return to the nucleus for a subsequent round of export. Beside KPNB1, also seems to interact with TNPO1/Transportin-1, RANBP5/IPO5 and IPO7/RANBP7 for nuclear import. The nucleoporin-like HRB/RIP is an essential cofactor that probably indirectly interacts with Rev to release HIV RNAs from the perinuclear region to the cytoplasm. The chain is Protein Rev from Homo sapiens (Human).